Here is a 383-residue protein sequence, read N- to C-terminus: Ovalbumin (383 aa).

At G2 the chain carries N-acetylglycine. The not cleaved signal peptide spans 22–48 (HHANDNMLYSPFAILSTLAMVFLGAKD). Position 69 is a phosphoserine (S69). C74 and C121 form a disulfide bridge. 2 N-linked (GlcNAc...) asparagine glycosylation sites follow: N293 and N312. A Phosphoserine modification is found at S345.

Belongs to the serpin family. Ov-serpin subfamily. Post-translationally, the signal sequence is not cleaved. The functional signal for membrane translocation of ovalbumin becomes accessible when the nascent chain is 50 to 60 residues long. The hydrophobic sequence which lies between residues 27 and 43 folds back on the preceding residues to form an amphipathic hairpin structure which is the signal element recognized by the membrane. Major protein of egg white.

It localises to the secreted. Storage protein of egg white. Lack protease inhibitory activity. The chain is Ovalbumin (SERPINB14) from Coturnix coturnix (Common quail).